The following is a 388-amino-acid chain: Succinate--CoA ligase [ADP-forming] subunit beta (388 aa).

The 236-residue stretch at 9 to 244 (KQLFADYGLP…PSQEDPREAH (236 aa)) folds into the ATP-grasp domain. ATP-binding positions include Lys-46, 53–55 (GRG), Glu-99, Thr-102, and Glu-107. 2 residues coordinate Mg(2+): Asn-199 and Asp-213. Residues Asn-264 and 321-323 (GIV) contribute to the substrate site.

This sequence belongs to the succinate/malate CoA ligase beta subunit family. In terms of assembly, heterotetramer of two alpha and two beta subunits. Requires Mg(2+) as cofactor.

The catalysed reaction is succinate + ATP + CoA = succinyl-CoA + ADP + phosphate. The enzyme catalyses GTP + succinate + CoA = succinyl-CoA + GDP + phosphate. Its pathway is carbohydrate metabolism; tricarboxylic acid cycle; succinate from succinyl-CoA (ligase route): step 1/1. Its function is as follows. Succinyl-CoA synthetase functions in the citric acid cycle (TCA), coupling the hydrolysis of succinyl-CoA to the synthesis of either ATP or GTP and thus represents the only step of substrate-level phosphorylation in the TCA. The beta subunit provides nucleotide specificity of the enzyme and binds the substrate succinate, while the binding sites for coenzyme A and phosphate are found in the alpha subunit. In Hahella chejuensis (strain KCTC 2396), this protein is Succinate--CoA ligase [ADP-forming] subunit beta.